The primary structure comprises 424 residues: Protein maelstrom 1 (424 aa).

Positions 2-69 form a DNA-binding region, HMG box; it reads PPKKHSGFMM…LTRVKKERLN (68 aa).

The protein belongs to the maelstrom family.

The protein resides in the cytoplasm. It is found in the nucleus. Involved both in the piRNA and miRNA metabolic processes. As a component of the meiotic nuage, plays a central role during oogenesis by repressing transposable elements and preventing their mobilization, which is essential for the germline integrity. Repression of transposable elements is mediated via the piRNA metabolic process, which mediates the repression of transposable elements during meiosis by forming complexes composed of piRNAs and Piwi proteins and governs the repression of transposons. As a nuclear component, it is required for proper differentiation in the germline stem cell (GSC) lineage by repressing microRNA-7 (miR-7), thereby acting as an indirect regulator of bag-of-marbles (Bam). Acts by binding to the promoter of miR-7 gene and repressing its expression; miR-7 repression alleviates the Bam repression by miR-7, thereby allowing differentiation in the germline stem cell (GSC) lineage. The polypeptide is Protein maelstrom 1 (mael1) (Drosophila ananassae (Fruit fly)).